Consider the following 885-residue polypeptide: Leucine--tRNA ligase (885 aa).

The 'HIGH' region motif lies at 43-53; it reads PYTSGQLHMGH. Positions 571-575 match the 'KMSKS' region motif; that stretch reads KMSKS. K574 lines the ATP pocket. A disordered region spans residues 866–885; the sequence is SVANKAEPGRPAIHVDEADD.

This sequence belongs to the class-I aminoacyl-tRNA synthetase family.

It localises to the cytoplasm. It catalyses the reaction tRNA(Leu) + L-leucine + ATP = L-leucyl-tRNA(Leu) + AMP + diphosphate. In Halobacterium salinarum (strain ATCC 700922 / JCM 11081 / NRC-1) (Halobacterium halobium), this protein is Leucine--tRNA ligase.